Consider the following 265-residue polypeptide: 3-methyl-2-oxobutanoate hydroxymethyltransferase (265 aa).

The Mg(2+) site is built by D46 and D85. Residues 46–47 (DS), D85, and K114 each bind 3-methyl-2-oxobutanoate. E116 provides a ligand contact to Mg(2+). E183 serves as the catalytic Proton acceptor.

Belongs to the PanB family. In terms of assembly, homodecamer; pentamer of dimers. The cofactor is Mg(2+).

The protein localises to the cytoplasm. It carries out the reaction 3-methyl-2-oxobutanoate + (6R)-5,10-methylene-5,6,7,8-tetrahydrofolate + H2O = 2-dehydropantoate + (6S)-5,6,7,8-tetrahydrofolate. It participates in cofactor biosynthesis; coenzyme A biosynthesis. In terms of biological role, catalyzes the reversible reaction in which hydroxymethyl group from 5,10-methylenetetrahydrofolate is transferred onto alpha-ketoisovalerate to form ketopantoate. This is 3-methyl-2-oxobutanoate hydroxymethyltransferase from Pyrobaculum calidifontis (strain DSM 21063 / JCM 11548 / VA1).